The primary structure comprises 686 residues: Phosphomethylpyrimidine synthase (686 aa).

Substrate is bound by residues asparagine 235, methionine 264, tyrosine 293, histidine 329, serine 349–glycine 351, aspartate 390–arginine 393, and glutamate 429. Histidine 433 contacts Zn(2+). Residue tyrosine 456 participates in substrate binding. Histidine 497 is a Zn(2+) binding site. The [4Fe-4S] cluster site is built by cysteine 577, cysteine 580, and cysteine 585. The segment at isoleucine 659–glycine 686 is disordered.

The protein belongs to the ThiC family. As to quaternary structure, homodimer. Requires [4Fe-4S] cluster as cofactor.

The enzyme catalyses 5-amino-1-(5-phospho-beta-D-ribosyl)imidazole + S-adenosyl-L-methionine = 4-amino-2-methyl-5-(phosphooxymethyl)pyrimidine + CO + 5'-deoxyadenosine + formate + L-methionine + 3 H(+). It functions in the pathway cofactor biosynthesis; thiamine diphosphate biosynthesis. In terms of biological role, catalyzes the synthesis of the hydroxymethylpyrimidine phosphate (HMP-P) moiety of thiamine from aminoimidazole ribotide (AIR) in a radical S-adenosyl-L-methionine (SAM)-dependent reaction. In Shewanella denitrificans (strain OS217 / ATCC BAA-1090 / DSM 15013), this protein is Phosphomethylpyrimidine synthase.